The sequence spans 270 residues: 5'-AMP-activated protein kinase subunit beta-1 (270 aa).

Residues 1–44 (MGNTSSERAALDRQGGHKTPRRDSSGGSKDGDRPKILMDSPEDA) are disordered. A lipid anchor (N-myristoyl glycine) is attached at Gly-2. Thr-4 bears the Phosphothreonine mark. A phosphoserine mark is found at Ser-5 and Ser-6. A compositionally biased stretch (basic and acidic residues) spans 9–36 (AALDRQGGHKTPRRDSSGGSKDGDRPKI). At Thr-19 the chain carries Phosphothreonine. Phosphoserine; by autocatalysis is present on residues Ser-24 and Ser-25. Residues Ser-40, Ser-96, and Ser-101 each carry the phosphoserine modification. The interval 68–163 (EVNDKAPAQA…QVKKTDFEVF (96 aa)) is glycogen-binding domain. At Ser-108 the chain carries Phosphoserine; by autocatalysis. Thr-148 is modified (phosphothreonine). Phosphoserine is present on Ser-182. Lys-201 is subject to N6-succinyllysine.

This sequence belongs to the 5'-AMP-activated protein kinase beta subunit family. In terms of assembly, AMPK is a heterotrimer of an alpha catalytic subunit (PRKAA1 or PRKAA2), a beta (PRKAB1 or PRKAB2) and a gamma non-catalytic subunits (PRKAG1, PRKAG2 or PRKAG3). Interacts with FNIP1 and FNIP2. In terms of processing, phosphorylated when associated with the catalytic subunit (PRKAA1 or PRKAA2). Phosphorylated by ULK1; leading to negatively regulate AMPK activity and suggesting the existence of a regulatory feedback loop between ULK1 and AMPK.

In terms of biological role, non-catalytic subunit of AMP-activated protein kinase (AMPK), an energy sensor protein kinase that plays a key role in regulating cellular energy metabolism. In response to reduction of intracellular ATP levels, AMPK activates energy-producing pathways and inhibits energy-consuming processes: inhibits protein, carbohydrate and lipid biosynthesis, as well as cell growth and proliferation. AMPK acts via direct phosphorylation of metabolic enzymes, and by longer-term effects via phosphorylation of transcription regulators. Also acts as a regulator of cellular polarity by remodeling the actin cytoskeleton; probably by indirectly activating myosin. Beta non-catalytic subunit acts as a scaffold on which the AMPK complex assembles, via its C-terminus that bridges alpha (PRKAA1 or PRKAA2) and gamma subunits (PRKAG1, PRKAG2 or PRKAG3). This chain is 5'-AMP-activated protein kinase subunit beta-1 (PRKAB1), found in Bos taurus (Bovine).